Reading from the N-terminus, the 510-residue chain is ATP synthase subunit alpha (510 aa).

170 to 177 (GDRQTGKT) lines the ATP pocket.

It belongs to the ATPase alpha/beta chains family. In terms of assembly, F-type ATPases have 2 components, CF(1) - the catalytic core - and CF(0) - the membrane proton channel. CF(1) has five subunits: alpha(3), beta(3), gamma(1), delta(1), epsilon(1). CF(0) has three main subunits: a(1), b(2) and c(9-12). The alpha and beta chains form an alternating ring which encloses part of the gamma chain. CF(1) is attached to CF(0) by a central stalk formed by the gamma and epsilon chains, while a peripheral stalk is formed by the delta and b chains.

The protein localises to the cell inner membrane. It carries out the reaction ATP + H2O + 4 H(+)(in) = ADP + phosphate + 5 H(+)(out). Produces ATP from ADP in the presence of a proton gradient across the membrane. The alpha chain is a regulatory subunit. This is ATP synthase subunit alpha from Caulobacter vibrioides (strain ATCC 19089 / CIP 103742 / CB 15) (Caulobacter crescentus).